Consider the following 414-residue polypeptide: MKSSVFILSLFLLLERQAAVVGQYGGTKGHFQSSSSGFMLGQKGHLNFGLKGGSEEAAEESIFMQSQHQMFGQDGGDMAQTSVSQEHTGVKGAAICRKGQVSQLKSQESQIKSFRQVKSSGQLKSGGSQLKSFGQVKSSESQLKSFGQVKASGSQLKSFGQVKASGSQLKSYGQMKSSGSQVKSFGQMKSSGSQVKSFGQMKASESQIKSFGQRKSQGGQLQSYGQMKSYGQTKSLESQAKSFGQVKSQSGQMKSSYGQRKSYGEETQLKSFDQDAQLKSYGQQKSQKQSSFSQVKSQSAQLKSFGQQKSLKGFSQQTQQKGFAMDEDLSQVRKQFDDDDLSVQQKSTQQMKTEEDLSQFGQQRQFGQERSQSYKGYLAQYRKKLQEQQQQKNFNQDNFFTKGGAGLYQAQLKG.

The N-terminal stretch at Met-1–Gly-22 is a signal peptide. Pyrrolidone carboxylic acid is present on Gln-23. Tandem repeats lie at residues Glu-108 to Ser-120, Gly-127 to Ser-139, Glu-140 to Ser-152, Gly-153 to Ser-165, Gly-166 to Ser-178, Gly-179 to Ser-191, Gly-192 to Ser-204, Glu-205 to Gln-217, Tyr-224 to Leu-236, Glu-237 to Gln-249, Tyr-257 to Leu-269, Asp-275 to Gln-287, and Ser-299 to Leu-311. A 13 X 13 AA tandem repeats region spans residues Glu-108 to Leu-311. 3 disordered regions span residues Lys-170–Lys-228, Ala-240–Gln-294, and Gly-306–Glu-369. Positions Ala-240–Gln-259 are enriched in polar residues. The span at Gln-277–Gln-294 shows a compositional bias: low complexity. 2 stretches are compositionally biased toward polar residues: residues Gly-306–Lys-321 and Ser-342–Met-351. A compositionally biased stretch (low complexity) spans Ser-358–Glu-369.

Post-translationally, the repeating unit appears to be involved in the formation of the copulatory plug via a transglutaminase reaction cross-linking glutamine and lysine residues.

Functionally, the rat seminal vesicle contains six major androgen-dependent secretory proteins referred to as SVS I-VI. The SVS I-III proteins appear to be components of the rat copulatory plug, with the SVS II protein being the major component. The chain is Seminal vesicle secretory protein 2 (Svs2) from Rattus norvegicus (Rat).